The primary structure comprises 120 residues: Large ribosomal subunit protein bL21 (120 aa).

The protein belongs to the bacterial ribosomal protein bL21 family. Part of the 50S ribosomal subunit. Contacts protein L20.

Functionally, this protein binds to 23S rRNA in the presence of protein L20. The sequence is that of Large ribosomal subunit protein bL21 from Rhizorhabdus wittichii (strain DSM 6014 / CCUG 31198 / JCM 15750 / NBRC 105917 / EY 4224 / RW1) (Sphingomonas wittichii).